Here is a 103-residue protein sequence, read N- to C-terminus: Large ribosomal subunit protein bL21 (103 aa).

It belongs to the bacterial ribosomal protein bL21 family. As to quaternary structure, part of the 50S ribosomal subunit. Contacts protein L20.

This protein binds to 23S rRNA in the presence of protein L20. The sequence is that of Large ribosomal subunit protein bL21 from Shewanella frigidimarina (strain NCIMB 400).